The sequence spans 141 residues: Putative pre-16S rRNA nuclease (141 aa).

The protein belongs to the YqgF nuclease family.

The protein localises to the cytoplasm. Could be a nuclease involved in processing of the 5'-end of pre-16S rRNA. In Vibrio parahaemolyticus serotype O3:K6 (strain RIMD 2210633), this protein is Putative pre-16S rRNA nuclease.